We begin with the raw amino-acid sequence, 993 residues long: MCDDGAVCAATAAANADDKSLLARFYHADRSLTAVASELDSFDGRAEPDRCSRLVSRLRQNQDKVLAITNLIMEELLGEDRDPRAFRAKFPEEVLQENLAGQLWFGAECLAAGSSILNRETESKEMRPLAQAVTKSLGNVRVLLRDQCLRNNVPNSKTLHLDFNDCTTEQLYESLKIFDRLFAEFELSYVSAMVQVKSRHEYEMQQWIGVLFSETLQRALKMGLLDQEMVDAFDPGLMFSIPRLAIVAGLVVYNKGPLNMDMPGDQLSEMFRPFRTILIKIRDLLRNLNQQELYQLEKLLCTNEDINTKAPLGSSSIEAPSQQDYSTANTHRTLERLTVDQRNNNNNINNNSSSSSNSNSGAPSVQEDANHRSPSMLSLSTASPTPSHSIGSTFSAATSSTNPPVNWSDGDDADDDDDGDDDDEDDDDDVDDDLVGNDDSDDDDDDTTDEHLLDDIVAADCASGYLIPNTNLGNLLQPQQVTLTDNFVASDDDDGYGQVAAGAGNDEEPSTSAATRHMQRLHLPSSDSYGDADGSHNNTTTIKSPDSDGQQQHQQHTSSRQRHSHHHHRHHHHHHRHSSHSSHSHHHQHQQHHSQPHPHRTTRSGRKRCSLESPTDVDVTVVQPEPEPELVSASADNSTASSLSDDISLAMRNTTARLKFKSTENLLHRLFVCIAGVADQLQTNFASDLRQILRSVFLMNVSSSQEEIDDIPEKTKESELFEFRASENDVIQESAGSNQSIYSAEEVNPELDNVFSASGARHSAGASMQRNHTTIDNNNSTSSSPPDATITTTTTTTTTRSHVTRSRSLGDQEVVASAAAAAAAAVNEEREMQRQRNNSVGSNTPSSASSSATSSSSEQNSPVSMRSGTGRRRHQSNNETQMPTTATTTTTTGTGTLAPPAWIPDGKAPRCMSCQTPFTAFRRRHHCRNCGGVFCGVCSNASAPLPKYGLTKAVRVCRDCYAREIRSSGGGGGGVVQMQRQQAANRPQTASAS.

Disordered regions lie at residues 340-449 (DQRN…DTTD), 494-623 (DGYG…TVVQ), 759-813 (GARH…GDQE), and 825-902 (AVNE…PPAW). The span at 343 to 360 (NNNNNINNNSSSSSNSNS) shows a compositional bias: low complexity. Residues 372 to 405 (RSPSMLSLSTASPTPSHSIGSTFSAATSSTNPPV) show a composition bias toward polar residues. Residues 409–448 (DGDDADDDDDGDDDDEDDDDDVDDDLVGNDDSDDDDDDTT) show a composition bias toward acidic residues. Phosphoserine occurs at positions 525 and 526. The segment covering 535–549 (SHNNTTTIKSPDSDG) has biased composition (polar residues). The span at 559 to 608 (SRQRHSHHHHRHHHHHHRHSSHSSHSHHHQHQQHHSQPHPHRTTRSGRKR) shows a compositional bias: basic residues. Residues 759 to 801 (GARHSAGASMQRNHTTIDNNNSTSSSPPDATITTTTTTTTTRS) are compositionally biased toward low complexity. At Ser808 the chain carries Phosphoserine. 2 stretches are compositionally biased toward low complexity: residues 842 to 862 (SNTPSSASSSATSSSSEQNSP) and 884 to 896 (TTATTTTTTGTGT). The segment at 905–965 (DGKAPRCMSC…VCRDCYAREI (61 aa)) adopts an FYVE-type zinc-finger fold. Zn(2+) contacts are provided by Cys911, Cys914, Cys927, Cys930, Cys935, Cys938, Cys957, and Cys960. Positions 968-993 (SGGGGGGVVQMQRQQAANRPQTASAS) are disordered. Polar residues predominate over residues 978–993 (MQRQQAANRPQTASAS).

It belongs to the lst-2 family.

Its function is as follows. Negative regulator of epidermal growth factor receptor (EGFR) signaling. This is Lateral signaling target protein 2 homolog from Drosophila willistoni (Fruit fly).